A 72-amino-acid chain; its full sequence is Probable protein transport protein Sec61 subunit gamma (72 aa).

The Cytoplasmic segment spans residues 1-40 (MSQKLQKPSFLSEYLRSIRLFSKKCVRPSGKELSMSIKRH). The chain crosses the membrane as a helical span at residues 41-61 (AIGIGFLGILGYAIKLIHIPI). The Extracellular segment spans residues 62–72 (NNIIVSSPGKE).

It belongs to the SecE/SEC61-gamma family. In terms of assembly, heterotrimeric complex composed of SEC61-alpha, SEC61-beta and SEC61-gamma.

Its subcellular location is the endoplasmic reticulum membrane. Its function is as follows. Necessary for protein translocation in the endoplasmic reticulum. This is Probable protein transport protein Sec61 subunit gamma from Encephalitozoon cuniculi (strain GB-M1) (Microsporidian parasite).